We begin with the raw amino-acid sequence, 153 residues long: Heavy metal-associated isoprenylated plant protein 25 (153 aa).

Residues 24 to 88 (LQTVDVRVLI…IIHRTGKRAE (65 aa)) form the HMA domain. Residues C35 and C38 each contribute to the a metal cation site. Position 150 is a cysteine methyl ester (C150). C150 carries the S-farnesyl cysteine lipid modification. A propeptide spans 151–153 (VVM) (removed in mature form).

The protein belongs to the HIPP family. As to expression, expressed in roots, shoot apical meristem, trichomes and flower buds.

Its subcellular location is the membrane. In terms of biological role, heavy-metal-binding protein. Binds cadmium. May be involved in cadmium transport and play a role in cadmium detoxification. This is Heavy metal-associated isoprenylated plant protein 25 from Arabidopsis thaliana (Mouse-ear cress).